Here is a 220-residue protein sequence, read N- to C-terminus: Charged multivesicular body protein 3 (220 aa).

The N-myristoyl glycine moiety is linked to residue Gly2. A coiled-coil region spans residues 22-54; the sequence is KIRKEMRVIDRQIRDIQREQEKVKRSIKESAKK. Residues 168 to 169 are important for autoinhibitory function; it reads IL. Residues 181–220 are disordered; it reads PSKVTDALPEPEITGAMAASDEEEEEDLEAMHSRLAALRS. An MIT-interacting motif motif is present at residues 201 to 209; it reads DEEEEEDLE. Interaction with STAMBP stretches follow at residues 203–207 and 219–220; these read EEEED and RS.

The protein belongs to the SNF7 family. As to quaternary structure, probable core component of the endosomal sorting required for transport complex III (ESCRT-III). ESCRT-III components are thought to multimerize to form a flat lattice on the perimeter membrane of the endosome. Several assembly forms of ESCRT-III may exist that interact and act sequentially.

The protein localises to the cytoplasm. It localises to the cytosol. Its subcellular location is the membrane. The protein resides in the endosome. It is found in the late endosome membrane. In terms of biological role, probable core component of the endosomal sorting required for transport complex III (ESCRT-III) which is involved in multivesicular bodies (MVBs) formation and sorting of endosomal cargo proteins into MVBs. MVBs contain intraluminal vesicles (ILVs) that are generated by invagination and scission from the limiting membrane of the endosome and mostly are delivered to lysosomes enabling degradation of membrane proteins, such as stimulated growth factor receptors, lysosomal enzymes and lipids. Involved in late stages of cytokinesis. Plays a role in endosomal sorting/trafficking of EGF receptor. The chain is Charged multivesicular body protein 3 (chmp3) from Xenopus laevis (African clawed frog).